The primary structure comprises 189 residues: Elongation factor P (189 aa).

K34 is modified (N6-(3,6-diaminohexanoyl)-5-hydroxylysine).

Belongs to the elongation factor P family. Post-translationally, may be beta-lysylated on the epsilon-amino group of Lys-34 by the combined action of EpmA and EpmB, and then hydroxylated on the C5 position of the same residue by EpmC (if this protein is present). Lysylation is critical for the stimulatory effect of EF-P on peptide-bond formation. The lysylation moiety may extend toward the peptidyltransferase center and stabilize the terminal 3-CCA end of the tRNA. Hydroxylation of the C5 position on Lys-34 may allow additional potential stabilizing hydrogen-bond interactions with the P-tRNA.

It localises to the cytoplasm. Its pathway is protein biosynthesis; polypeptide chain elongation. Involved in peptide bond synthesis. Alleviates ribosome stalling that occurs when 3 or more consecutive Pro residues or the sequence PPG is present in a protein, possibly by augmenting the peptidyl transferase activity of the ribosome. Modification of Lys-34 is required for alleviation. This chain is Elongation factor P, found in Saccharophagus degradans (strain 2-40 / ATCC 43961 / DSM 17024).